The following is a 468-amino-acid chain: 6-phospho-beta-galactosidase (468 aa).

Residues Gln-19, His-116, Asn-159, Glu-160, and Asn-297 each coordinate D-galactose 6-phosphate. Glu-160 acts as the Proton donor in catalysis. Catalysis depends on Glu-375, which acts as the Nucleophile. D-galactose 6-phosphate is bound by residues Ser-428, Trp-429, Lys-435, and Tyr-437.

This sequence belongs to the glycosyl hydrolase 1 family.

The catalysed reaction is a 6-phospho-beta-D-galactoside + H2O = D-galactose 6-phosphate + an alcohol. The protein operates within carbohydrate metabolism; lactose degradation; D-galactose 6-phosphate and beta-D-glucose from lactose 6-phosphate: step 1/1. The polypeptide is 6-phospho-beta-galactosidase (Streptococcus pyogenes serotype M4 (strain MGAS10750)).